Here is a 498-residue protein sequence, read N- to C-terminus: ATP synthase subunit beta, chloroplastic (498 aa).

ATP is bound at residue Gly172 to Thr179.

This sequence belongs to the ATPase alpha/beta chains family. F-type ATPases have 2 components, CF(1) - the catalytic core - and CF(0) - the membrane proton channel. CF(1) has five subunits: alpha(3), beta(3), gamma(1), delta(1), epsilon(1). CF(0) has four main subunits: a(1), b(1), b'(1) and c(9-12).

The protein localises to the plastid. Its subcellular location is the chloroplast thylakoid membrane. It carries out the reaction ATP + H2O + 4 H(+)(in) = ADP + phosphate + 5 H(+)(out). Its function is as follows. Produces ATP from ADP in the presence of a proton gradient across the membrane. The catalytic sites are hosted primarily by the beta subunits. The polypeptide is ATP synthase subunit beta, chloroplastic (Brasenia schreberi (Water shield)).